Here is a 117-residue protein sequence, read N- to C-terminus: Swarming motility protein SwrAA (117 aa).

The protein localises to the cytoplasm. In terms of biological role, required for swarm cell differentiation. Plays a crucial role in regulating the degree of cell flagellation. In Bacillus subtilis (strain 168), this protein is Swarming motility protein SwrAA (swrAA).